Reading from the N-terminus, the 838-residue chain is Probable glucan 1,3-beta-glucosidase D (838 aa).

The segment covering 1–23 (MPSHSRSRDRYRGRDESEPERDR) has biased composition (basic and acidic residues). The tract at residues 1–298 (MPSHSRSRDR…GASDSDMDGA (298 aa)) is disordered. The Cytoplasmic portion of the chain corresponds to 1-310 (MPSHSRSRDR…GTPFWKKKKT (310 aa)). Residues 35–45 (DYEDDELDDDD) show a composition bias toward acidic residues. Basic and acidic residues-rich tracts occupy residues 111–124 (DSPRRRDRHRDGDR), 149–164 (SRDDRRERAYESEREA), 200–221 (AKLRSEYDKEDRSRAKADAKAE), and 234–246 (QPRRLDPFPEETP). The helical; Signal-anchor for type II membrane protein transmembrane segment at 311–331 (WIAVGVVVVLLAIIIPVAVVV) threads the bilayer. At 332–838 (SKKNNEKKSD…PDFGDLPENY (507 aa)) the chain is on the extracellular side. A disordered region spans residues 335–359 (NNEKKSDSTTDDTTPRNSNLDGISR). Residues Asn-383, Asn-388, Asn-400, Asn-553, and Asn-565 are each glycosylated (N-linked (GlcNAc...) asparagine). Glu-604 functions as the Proton donor in the catalytic mechanism. Asn-643 and Asn-696 each carry an N-linked (GlcNAc...) asparagine glycan. Glu-709 functions as the Nucleophile in the catalytic mechanism.

The protein belongs to the glycosyl hydrolase 5 (cellulase A) family.

Its subcellular location is the cell membrane. The catalysed reaction is Successive hydrolysis of beta-D-glucose units from the non-reducing ends of (1-&gt;3)-beta-D-glucans, releasing alpha-glucose.. Functionally, glucosidase involved in the degradation of cellulosic biomass. Active on lichenan. The sequence is that of Probable glucan 1,3-beta-glucosidase D (exgD) from Aspergillus terreus (strain NIH 2624 / FGSC A1156).